Consider the following 217-residue polypeptide: GTP cyclohydrolase 1 (217 aa).

Residues Cys109, His112, and Cys180 each contribute to the Zn(2+) site.

The protein belongs to the GTP cyclohydrolase I family. Toroid-shaped homodecamer, composed of two pentamers of five dimers.

The catalysed reaction is GTP + H2O = 7,8-dihydroneopterin 3'-triphosphate + formate + H(+). It functions in the pathway cofactor biosynthesis; 7,8-dihydroneopterin triphosphate biosynthesis; 7,8-dihydroneopterin triphosphate from GTP: step 1/1. The protein is GTP cyclohydrolase 1 of Vibrio campbellii (strain ATCC BAA-1116).